Consider the following 263-residue polypeptide: tRNA dimethylallyltransferase (263 aa).

It belongs to the IPP transferase family. Monomer. Requires Mg(2+) as cofactor.

It catalyses the reaction adenosine(37) in tRNA + dimethylallyl diphosphate = N(6)-dimethylallyladenosine(37) in tRNA + diphosphate. In terms of biological role, catalyzes the transfer of a dimethylallyl group onto the adenine at position 37 in tRNAs that read codons beginning with uridine, leading to the formation of N6-(dimethylallyl)adenosine (i(6)A). This chain is tRNA dimethylallyltransferase, found in Leifsonia xyli subsp. xyli (strain CTCB07).